A 188-amino-acid chain; its full sequence is PRA1 family protein 3 (188 aa).

Position 1 is an N-acetylmethionine (Met1). Residues 1–35 lie on the Cytoplasmic side of the membrane; it reads MDVNLAPLRAWDDFFPGSDRFARPDFRDISKWNNR. 2 consecutive transmembrane segments (helical) span residues 36–56 and 57–77; these read VVSNLLYYQTNYLVVAAMMIS and VVGFLSPFNMILGGIIVVLVF. Topologically, residues 78 to 92 are cytoplasmic; the sequence is TGFVWAAHNKDILRR. 2 helical membrane passes run 93 to 113 and 115 to 135; these read MKKQYPTAFVMVVMLASYFLI and MFGGVMVFVFGITFPLLLMFI. The segment at 103–117 is required for homodimer formation and heterodimer formation with ARL6IP1; that stretch reads MVVMLASYFLISMFG. The Cytoplasmic portion of the chain corresponds to 136-188; it reads HASLRLRNLKNKLENKMEGIGLKKTPMGIILDALEQQEDSINKFADYISKARE. Positions 136–188 are targeting to endoplasmic reticulum membrane; that stretch reads HASLRLRNLKNKLENKMEGIGLKKTPMGIILDALEQQEDSINKFADYISKARE.

The protein belongs to the PRA1 family. As to quaternary structure, homodimer. Heterodimer with ARL6IP1. Forms multimers. Interacts with ARL6. Interacts with prenylated RAB1A and RAB3A. Interacts with SLC1A1/EAAC1. Interacts with RTN2 (via first transmembrane domain). Does not interact with VAMP1, VAMP2 or VAMP3. As to expression, ubiquitous. Most abundant in heart and brain. In the embryonic brain cortex, expressed in neurons and astrocytes.

The protein resides in the endoplasmic reticulum membrane. It is found in the cell membrane. It localises to the cytoplasm. The protein localises to the cytoskeleton. Regulates intracellular concentrations of taurine and glutamate. Negatively modulates SLC1A1/EAAC1 glutamate transport activity by decreasing its affinity for glutamate in a PKC activity-dependent manner. Plays a role in the retention of SLC1A1/EAAC1 in the endoplasmic reticulum. In Rattus norvegicus (Rat), this protein is PRA1 family protein 3 (Arl6ip5).